The sequence spans 435 residues: Nuclear receptor subfamily 6 group A member 1 (435 aa).

The segment at residues 11-86 (QRACLICGDR…MGMNRKAIRE (76 aa)) is a DNA-binding region (nuclear receptor). 2 consecutive NR C4-type zinc fingers follow at residues 14–34 (CLIC…CEGC) and 50–69 (CSRD…CQYC). A disordered region spans residues 84 to 158 (IREDGMPGGR…STPSSSRSME (75 aa)). Polar residues predominate over residues 121–141 (NTSWSNNGDSDHSSPGNAVSE). A compositionally biased stretch (low complexity) spans 142–156 (SNQPSPVSTPSSSRS). The 232-residue stretch at 204-435 (QSHTLINQLL…HSCKTIVTKE (232 aa)) folds into the NR LBD domain.

The protein belongs to the nuclear hormone receptor family. NR6 subfamily. In terms of assembly, homodimer. Transiently expressed in differentiating cells of all embryonic germ layers. Expressed in an anterior to posterior concentration gradient from late gastrula to midneurula stages. Shows a complicated spatio-temporal pattern of expression during neurulation, being predominant in the neural plate and neural crest in midneurula embryos. At late tailbud (stage 30), mainly expressed in the head mesenchyme, gill arches and tail tip. Expression persists in the epidermis, somites and endoderm, and in the central nervous system, expression is restricted to the midbrain, hindbrain and part of the spinal cord. Isoforms Oo and Em are both expressed in the brain and isoform Oo is expressed in the germ cells of both the adult testis and ovary.

Its subcellular location is the cytoplasm. It localises to the nucleus. Probable orphan nuclear receptor. Binds to a response element containing repeats of the motif 5'-AGGTCA-3'. Required for anterior-posterior patterning during organogenesis. Acts with chordin to play a role in patterning the midbrain-hindbrain. Isoform Em is required for integrin-mediated cell matrix interaction during neurulation and for the morphogenetic movements leading to formation of the neural tube. Also mediates the effect of retinoic acid on primary neurogenesis. The protein is Nuclear receptor subfamily 6 group A member 1 of Xenopus laevis (African clawed frog).